The chain runs to 1002 residues: Eukaryotic translation initiation factor 5B (1002 aa).

2 disordered regions span residues 1–172 and 184–402; these read MAKK…GLAA and EEQE…NKKD. Acidic residues predominate over residues 13 to 23; that stretch reads WDEEFEEDAAQ. A compositionally biased stretch (polar residues) spans 27-37; the sequence is ISATPTPNPES. Low complexity predominate over residues 47–57; the sequence is EASASAEGAEA. Basic and acidic residues-rich tracts occupy residues 75 to 111 and 120 to 154; these read KKVI…EQAA and QKEK…ESDK. Residues 155–172 show a composition bias toward low complexity; it reads PSASAKKPAKKVPAGLAA. 2 stretches are compositionally biased toward basic and acidic residues: residues 184–252 and 267–276; these read EEQE…ERRR and AKKDGEENKP. Residues 277 to 287 are compositionally biased toward basic residues; it reads KKVVYSKKKKR. A compositionally biased stretch (basic and acidic residues) spans 297–306; sequence IKSDSKKDSE. Acidic residues-rich tracts occupy residues 307-342 and 352-370; these read VVPD…EETQ and DQNQ…EEEE. Residues 381–398 show a composition bias toward low complexity; it reads STPAATPAATPTPSSASP. The tr-type G domain maps to 403–621; sequence LRSPICCILG…LLELTQKRMS (219 aa). Phosphoserine is present on Ser405. Residues 412-419 are G1; it reads GHVDTGKT. Asp415 is a binding site for K(+). Position 415 (Asp415) interacts with Na(+). GTP is bound by residues 415-420, Gln431, and 437-439; these read DTGKTK and GIT. A Mg(2+)-binding site is contributed by Thr419. Residue Gly437 coordinates K(+). Gly437 provides a ligand contact to Na(+). Residues 437 to 441 are G2; it reads GITQQ. Residue Thr439 participates in Mg(2+) binding. The tract at residues 476-479 is G3; that stretch reads DTPG. GTP contacts are provided by residues 530–533 and 599–600; these read NKID and AV. The interval 530 to 533 is G4; that stretch reads NKID. The G5 stretch occupies residues 598–600; that stretch reads SAV.

Belongs to the TRAFAC class translation factor GTPase superfamily. Classic translation factor GTPase family. IF-2 subfamily. Na(+) serves as cofactor. K(+) is required as a cofactor.

It is found in the cytoplasm. The enzyme catalyses GTP + H2O = GDP + phosphate + H(+). Its function is as follows. Plays a role in translation initiation. Translational GTPase that catalyzes the joining of the 40S and 60S subunits to form the 80S initiation complex with the initiator methionine-tRNA in the P-site base paired to the start codon. GTP binding and hydrolysis induces conformational changes in the enzyme that renders it active for productive interactions with the ribosome. The release of the enzyme after formation of the initiation complex is a prerequisite to form elongation-competent ribosomes. Stimulates 20S pre-rRNA cleavage to mature 18S rRNA by PIN-domain endonuclease NOB1. This chain is Eukaryotic translation initiation factor 5B, found in Saccharomyces cerevisiae (strain ATCC 204508 / S288c) (Baker's yeast).